The sequence spans 311 residues: tRNA dimethylallyltransferase (311 aa).

Gly13–Thr20 contributes to the ATP binding site. Thr15–Thr20 lines the substrate pocket. 2 interaction with substrate tRNA regions span residues Asp38–Gln41 and Gln166–Arg170.

The protein belongs to the IPP transferase family. As to quaternary structure, monomer. The cofactor is Mg(2+).

It catalyses the reaction adenosine(37) in tRNA + dimethylallyl diphosphate = N(6)-dimethylallyladenosine(37) in tRNA + diphosphate. Functionally, catalyzes the transfer of a dimethylallyl group onto the adenine at position 37 in tRNAs that read codons beginning with uridine, leading to the formation of N6-(dimethylallyl)adenosine (i(6)A). The chain is tRNA dimethylallyltransferase from Staphylococcus aureus (strain MSSA476).